A 1653-amino-acid polypeptide reads, in one-letter code: Protein TOPAZ1 (1653 aa).

Disordered stretches follow at residues 1–94 (MRPP…TDLV), 284–303 (YSVE…KSGK), and 415–442 (ISST…SETE). Residues 63-78 (GREETEGDKLAKENGK) are compositionally biased toward basic and acidic residues. A compositionally biased stretch (basic and acidic residues) spans 423–442 (SDGHHMEKRSPRGDLRSETE).

In terms of tissue distribution, restricted to testis, where it localizes to germ cells.

It is found in the cytoplasm. The protein localises to the cytosol. Its function is as follows. Important for normal spermatogenesis and male fertility. Specifically required for progression to the post-meiotic stages of spermatocyte development. Seems to be necessary for normal expression levels of a number of testis-expressed gene transcripts, although its role in this process is unclear. This Mus musculus (Mouse) protein is Protein TOPAZ1.